The primary structure comprises 217 residues: ATP synthase F(0) complex subunit a (217 aa).

The next 6 membrane-spanning stretches (helical) occupy residues 20 to 40 (MNWI…WILP), 70 to 90 (PAFL…FSLF), 100 to 120 (MVFS…LSTC), 126 to 146 (MIAH…MTII), 166 to 188 (LIAG…IIFI), and 193 to 215 (MIFE…SLYS).

This sequence belongs to the ATPase A chain family. As to quaternary structure, component of the ATP synthase complex composed at least of ATP5F1A/subunit alpha, ATP5F1B/subunit beta, ATP5MC1/subunit c (homooctomer), MT-ATP6/subunit a, MT-ATP8/subunit 8, ATP5ME/subunit e, ATP5MF/subunit f, ATP5MG/subunit g, ATP5MK/subunit k, ATP5MJ/subunit j, ATP5F1C/subunit gamma, ATP5F1D/subunit delta, ATP5F1E/subunit epsilon, ATP5PF/subunit F6, ATP5PB/subunit b, ATP5PD/subunit d, ATP5PO/subunit OSCP. ATP synthase complex consists of a soluble F(1) head domain (subunits alpha(3) and beta(3)) - the catalytic core - and a membrane F(0) domain - the membrane proton channel (subunits c, a, 8, e, f, g, k and j). These two domains are linked by a central stalk (subunits gamma, delta, and epsilon) rotating inside the F1 region and a stationary peripheral stalk (subunits F6, b, d, and OSCP). Interacts with DNAJC30; interaction is direct.

It is found in the mitochondrion inner membrane. It catalyses the reaction H(+)(in) = H(+)(out). Subunit a, of the mitochondrial membrane ATP synthase complex (F(1)F(0) ATP synthase or Complex V) that produces ATP from ADP in the presence of a proton gradient across the membrane which is generated by electron transport complexes of the respiratory chain. ATP synthase complex consist of a soluble F(1) head domain - the catalytic core - and a membrane F(1) domain - the membrane proton channel. These two domains are linked by a central stalk rotating inside the F(1) region and a stationary peripheral stalk. During catalysis, ATP synthesis in the catalytic domain of F(1) is coupled via a rotary mechanism of the central stalk subunits to proton translocation. With the subunit c (ATP5MC1), forms the proton-conducting channel in the F(0) domain, that contains two crucial half-channels (inlet and outlet) that facilitate proton movement from the mitochondrial intermembrane space (IMS) into the matrix. Protons are taken up via the inlet half-channel and released through the outlet half-channel, following a Grotthuss mechanism. The polypeptide is ATP synthase F(0) complex subunit a (Rhopalosiphum padi (Bird cherry-oat aphid)).